The primary structure comprises 212 residues: Nucleoredoxin-like protein 1 (212 aa).

Positions 1–164 constitute a Thioredoxin domain; sequence MASLFSGRIL…AAEVLDRNFQ (164 aa). Residues 191–212 are disordered; that stretch reads AARGGRDPGGGGGEEGGAGGLF. Residues 197–212 show a composition bias toward gly residues; that stretch reads DPGGGGGEEGGAGGLF.

This sequence belongs to the nucleoredoxin family. In terms of assembly, interacts with isoform 1 of BSG.

It localises to the cell projection. It is found in the cilium. The protein localises to the photoreceptor outer segment. In terms of biological role, plays an important role in retinal cone photoreceptor survival. In association with glucose transporter SLC16A1/GLUT1 and BSG, promotes retinal cone survival by enhancing aerobic glycolysis and accelerating the entry of glucose into photoreceptors. May play a role in cone cell viability, slowing down cone degeneration, does not seem to play a role in degenerating rods. This Homo sapiens (Human) protein is Nucleoredoxin-like protein 1 (NXNL1).